The sequence spans 693 residues: Elongation factor G (693 aa).

One can recognise a tr-type G domain in the interval Glu-8–Leu-282. GTP-binding positions include Ala-17–Thr-24, Asp-81–His-85, and Asn-135–Asp-138.

The protein belongs to the TRAFAC class translation factor GTPase superfamily. Classic translation factor GTPase family. EF-G/EF-2 subfamily.

The protein resides in the cytoplasm. Functionally, catalyzes the GTP-dependent ribosomal translocation step during translation elongation. During this step, the ribosome changes from the pre-translocational (PRE) to the post-translocational (POST) state as the newly formed A-site-bound peptidyl-tRNA and P-site-bound deacylated tRNA move to the P and E sites, respectively. Catalyzes the coordinated movement of the two tRNA molecules, the mRNA and conformational changes in the ribosome. This Streptococcus suis (strain 05ZYH33) protein is Elongation factor G.